Consider the following 223-residue polypeptide: SCMKAAPMKEVSIRGQGSLAYPGLRTQGNLETLSGPNDATRGLTSLADTFEHVIEELLDEQQVVQPSKENKDADLYSSRVMLSSQVPLEPPLLFLLEEYKNYLDAANMSMRVRRHSDPARRGELSVCDSISEWVTAAEKKTAVDMSGATVTVLEKVPVPKGQLKQYFYETKCSSKGYAKEGCRGIDKRYWNSQCRTTQSYVRALTMDNKKRVGWRFIRIDTSC.

The signal sequence occupies residues 1–5 (SCMKA). Positions 6–114 (APMKEVSIRG…AANMSMRVRR (109 aa)) are excised as a propeptide. N-linked (GlcNAc...) asparagine glycosylation occurs at N107. 2 disulfide bridges follow: C127–C194 and C172–C223.

The protein belongs to the NGF-beta family.

The protein localises to the secreted. Its function is as follows. Promotes the survival of neuronal populations that are all located either in the central nervous system or directly connected to it. This is Neurotrophic factor BDNF precursor form (BDNF) from Charina bottae (Northern rubber boa).